We begin with the raw amino-acid sequence, 587 residues long: Sedolisin (587 aa).

The signal sequence occupies residues 1-32 (MKSSAAKQTVLCLNRYAVVALPLAIASFAAFG). A propeptide spans 33–215 (ASPASTLWAP…VGERSAAKTL (183 aa)) (removed in mature form). The 365-residue stretch at 219–583 (TAKGHNPTEF…AKLSAYIRSN (365 aa)) folds into the Peptidase S53 domain. The disordered stretch occupies residues 276–295 (TIQTGSSNGDYSDDQQGQGE). Residues Glu295 and Asp299 each act as charge relay system in the active site. Cysteines 352 and 391 form a disulfide. Ser502 functions as the Charge relay system in the catalytic mechanism. Ca(2+)-binding residues include Asp543, Val544, Gly559, Gly561, and Asp563. Positions 586-587 (GH) are cleaved as a propeptide — removed in mature form.

Ca(2+) is required as a cofactor. Autocatalytically processed.

It localises to the periplasm. It catalyses the reaction Hydrolysis of the B chain of insulin at 13-Glu-|-Ala-14, 15-Leu-|-Tyr-16 and 25-Phe-|-Tyr-26 and angiotensin I at 4-Tyr-|-Ile-5. A good synthetic substrate is Lys-Pro-Ile-Glu-Phe-|-Phe(NO2)-Arg-Leu.. With respect to regulation, inhibited by 1,2-epoxy-3-(p-nitrophenoxy)propane (EPNP), but not by carboxyl proteinase inhibitors, such as pepstatin, pepstatin Ac (S-PI) and diazoacetyl-DL-norleucine methyl ester (DAN). Inhibited by tyrostatin, pseudo-tyrostatin, AcIPF, AcIAF, chymostatin and pseudo-iodotyrostatin. Pepstatin-insensitive serine-carboxyl proteinase. In vitro can hydrolyze various synthetic peptides. Also shows activity on acid-denatured hemoglobin and on casein. This Pseudomonas sp. (strain 101) (Achromobacter parvulus T1) protein is Sedolisin (pcp).